A 74-amino-acid chain; its full sequence is Putative defensin-like protein 36 (74 aa).

Residues 1–22 form the signal peptide; the sequence is MASNKVSFFLVLCLCILLAGEC. Disulfide bonds link Cys-33/Cys-59, Cys-45/Cys-69, and Cys-49/Cys-71.

This sequence belongs to the DEFL family.

Its subcellular location is the secreted. The polypeptide is Putative defensin-like protein 36 (Arabidopsis thaliana (Mouse-ear cress)).